Consider the following 255-residue polypeptide: 5'-nucleotidase SurE (255 aa).

Residues Asp8, Asp9, Ser39, and Asn95 each coordinate a divalent metal cation.

This sequence belongs to the SurE nucleotidase family. The cofactor is a divalent metal cation.

Its subcellular location is the cytoplasm. It catalyses the reaction a ribonucleoside 5'-phosphate + H2O = a ribonucleoside + phosphate. Nucleotidase that shows phosphatase activity on nucleoside 5'-monophosphates. The chain is 5'-nucleotidase SurE from Thermosipho melanesiensis (strain DSM 12029 / CIP 104789 / BI429).